The chain runs to 521 residues: MTQDKILILDFGSQVTQLIARRVREAHVYCELHSFDMPLDEIKAFNPKGIILSGGPNSVYESDYQADTGIFDLGIPILGICYGMQFMAHHLGGEVQPGNQREFGYAQVKTIDSELTRGIQDDTPNTLDVWMSHGDKVSKLPTGFTVIGDTPSCPIAMMENAEKQFYGIQFHPEVTHTKQGRALLNRFVLDICGAQPGWTMPNYIEEAVAKIREQVGSDEVILGLSGGVDSSVAAALIHRAIGDQLTCVFVDHGLLRLNEGKMVMDMFARNLGVKVIHVDAEGQFMAKLAGVTDPEKKRKIIGAEFIEVFDAEEKKLTNAKWLAQGTIYPDVIESAGAKTKKAHAIKSHHNVGGLPENMKLKLLEPLRDLFKDEVRELGVALGLPREMVYRHPFPGPGLGVRILGEVKKEYADLLRQADDIFIQELRNTTDENGTSWYDLTSQAFAVFLPVKSVGVMGDGRTYDYVVALRAVITSDFMTAHWAELPYSLLGRVSNRIINEVKGINRVVYDVSGKPPATIEWE.

A Glutamine amidotransferase type-1 domain is found at 5–197 (KILILDFGSQ…VLDICGAQPG (193 aa)). Catalysis depends on C81, which acts as the Nucleophile. Catalysis depends on residues H171 and E173. The GMPS ATP-PPase domain occupies 198–390 (WTMPNYIEEA…LGLPREMVYR (193 aa)). 225 to 231 (SGGVDSS) lines the ATP pocket.

Homodimer.

It carries out the reaction XMP + L-glutamine + ATP + H2O = GMP + L-glutamate + AMP + diphosphate + 2 H(+). Its pathway is purine metabolism; GMP biosynthesis; GMP from XMP (L-Gln route): step 1/1. Functionally, catalyzes the synthesis of GMP from XMP. This chain is GMP synthase [glutamine-hydrolyzing] (guaA), found in Neisseria meningitidis serogroup A / serotype 4A (strain DSM 15465 / Z2491).